Consider the following 326-residue polypeptide: Ribose-phosphate pyrophosphokinase (326 aa).

Residues Asn-45–Glu-47 and Arg-104–Gln-105 contribute to the ATP site. Residues His-138 and Asp-178 each coordinate Mg(2+). Lys-202 is a catalytic residue. D-ribose 5-phosphate is bound by residues Arg-204, Asp-230, and Asp-234–Thr-238.

This sequence belongs to the ribose-phosphate pyrophosphokinase family. Class I subfamily. Homohexamer. Requires Mg(2+) as cofactor.

It localises to the cytoplasm. It carries out the reaction D-ribose 5-phosphate + ATP = 5-phospho-alpha-D-ribose 1-diphosphate + AMP + H(+). Its pathway is metabolic intermediate biosynthesis; 5-phospho-alpha-D-ribose 1-diphosphate biosynthesis; 5-phospho-alpha-D-ribose 1-diphosphate from D-ribose 5-phosphate (route I): step 1/1. Its function is as follows. Involved in the biosynthesis of the central metabolite phospho-alpha-D-ribosyl-1-pyrophosphate (PRPP) via the transfer of pyrophosphoryl group from ATP to 1-hydroxyl of ribose-5-phosphate (Rib-5-P). This Mycobacterium bovis (strain ATCC BAA-935 / AF2122/97) protein is Ribose-phosphate pyrophosphokinase.